The chain runs to 760 residues: Formate acetyltransferase 1 (760 aa).

One can recognise a PFL domain in the interval 3–625; sequence ELNEKLATAW…KTGNTPDGRR (623 aa). At lysine 63 the chain carries N6-acetyllysine; alternate. At lysine 63 the chain carries N6-succinyllysine; alternate. N6-succinyllysine is present on lysine 107. At lysine 117 the chain carries N6-acetyllysine; alternate. The residue at position 117 (lysine 117) is an N6-succinyllysine; alternate. At lysine 124 the chain carries N6-succinyllysine. Lysine 195 carries the post-translational modification N6-acetyllysine; alternate. The residue at position 195 (lysine 195) is an N6-succinyllysine; alternate. Cysteine 419 acts as the S-acetylcysteine intermediate in catalysis. The Cysteine radical intermediate role is filled by cysteine 420. At lysine 454 the chain carries N6-acetyllysine; alternate. Lysine 454 carries the N6-succinyllysine; alternate modification. The residue at position 467 (lysine 467) is an N6-succinyllysine. 2 positions are modified to N6-acetyllysine: lysine 541 and lysine 591. In terms of domain architecture, Glycine radical spans 632–760; the sequence is PGANPMHGRD…VITRTFTQSM (129 aa). Lysine 654 is modified (N6-succinyllysine). Glycine 735 is modified (glycine radical).

Belongs to the glycyl radical enzyme (GRE) family. PFL subfamily. In terms of assembly, homodimer. Interacts specifically with FocA.

Its subcellular location is the cytoplasm. It catalyses the reaction formate + acetyl-CoA = pyruvate + CoA. The protein operates within fermentation; pyruvate fermentation; formate from pyruvate: step 1/1. In terms of biological role, catalyzes the conversion of pyruvate to formate and acetyl-CoA. In addition, may be involved in the control of the activity of the formate channel FocA, via direct interaction with FocA. This is Formate acetyltransferase 1 (pflB) from Escherichia coli (strain K12).